The sequence spans 195 residues: Inhibitor of glycogen debranching 1 (195 aa).

The segment covering 1–18 (MTDPHLNTPQVSTSPTFE) has biased composition (polar residues). The segment at 1–101 (MTDPHLNTPQ…ERRSSGPMDF (101 aa)) is disordered. The residue at position 64 (S64) is a Phosphoserine. Position 65 is a phosphothreonine (T65). Basic and acidic residues predominate over residues 75-95 (EQARERESSIGEHAPGAERRS). S95 and S96 each carry phosphoserine. At T132 the chain carries Phosphothreonine. Residues 146-175 (NSYLDNNSNGNSARVPHGSPPQLGTRRKSS) form a disordered region. Over residues 148–157 (YLDNNSNGNS) the composition is skewed to polar residues. S164 bears the Phosphoserine mark.

As to quaternary structure, interacts with GDB1.

It is found in the cytoplasm. In terms of biological role, acts as an inhibitor of GDB1, enhancing the ability of cells to store glucose as glycogen. The protein is Inhibitor of glycogen debranching 1 (IGD1) of Saccharomyces cerevisiae (strain ATCC 204508 / S288c) (Baker's yeast).